A 786-amino-acid polypeptide reads, in one-letter code: Zinc finger transcription factor YRM1 (786 aa).

Residues Met1–Arg25 form a disordered region. The segment at residues Cys31–Cys59 is a DNA-binding region (zn(2)-C6 fungal-type). Residues Pro721–Thr747 are disordered. Residues Asn737–Thr747 are compositionally biased toward polar residues.

The protein resides in the cytoplasm. It is found in the nucleus. In terms of biological role, transcription factor involved in the regulation of multidrug resistance genes. Acts in concert with YRR1. The polypeptide is Zinc finger transcription factor YRM1 (YRM1) (Saccharomyces cerevisiae (strain ATCC 204508 / S288c) (Baker's yeast)).